Reading from the N-terminus, the 209-residue chain is Uracil phosphoribosyltransferase (209 aa).

5-phospho-alpha-D-ribose 1-diphosphate contacts are provided by residues Arg79, Arg104, and 131 to 139 (DPMLATGNS). Uracil-binding positions include Ile194 and 199–201 (GDA). Asp200 contacts 5-phospho-alpha-D-ribose 1-diphosphate.

The protein belongs to the UPRTase family. Mg(2+) serves as cofactor.

The enzyme catalyses UMP + diphosphate = 5-phospho-alpha-D-ribose 1-diphosphate + uracil. It functions in the pathway pyrimidine metabolism; UMP biosynthesis via salvage pathway; UMP from uracil: step 1/1. Its activity is regulated as follows. Allosterically activated by GTP. Its function is as follows. Catalyzes the conversion of uracil and 5-phospho-alpha-D-ribose 1-diphosphate (PRPP) to UMP and diphosphate. This Sinorhizobium fredii (strain NBRC 101917 / NGR234) protein is Uracil phosphoribosyltransferase.